The primary structure comprises 902 residues: Gamma-tubulin complex component 2 (902 aa).

Residue Tyr-83 is modified to Phosphotyrosine. Positions 874-902 (AERSQKATPQVPVLRGPPAPAPRVAVTAQ) are disordered.

It belongs to the TUBGCP family. As to quaternary structure, component of the gamma-tubulin ring complex (gTuRC) consisting of TUBGCP2, TUBGCP3, TUBGCP4, TUBGCP5 and TUBGCP6 and gamma-tubulin TUBG1 or TUBG2. TUBGCP2, TUBGCP3, TUBGCP4, TUBGCP5 and TUBGCP6 assemble in a 5:5:2:1:1 stoichiometry; each is associated with a gamma-tubulin, thereby arranging 14 gamma-tubulins in a helical manner. Gamma-tubulin at the first position is blocked by TUBGCP3 at the last position, allowing 13 protafilaments to grow into a microtubule. The gTuRC (via TUBGCP3 and TUBGCP6) interacts with ACTB and MZT1; the interactions form a luminal bridge that stabilizes the initial structure during complex assembly. The gTuRC (via TUBGCP2) interacts with MZT2A/MZT2B and CDK5RAP2 (via CM1 motif); the interactions play a role in gTuRC activation. Interacts with ATF5; the ATF5:PCNT:polyglutamylated tubulin (PGT) tripartite unites the mother centriole and the pericentriolar material (PCM) in the centrosome. Ubiquitously expressed.

It is found in the cytoplasm. The protein localises to the cytoskeleton. The protein resides in the microtubule organizing center. It localises to the centrosome. In terms of biological role, component of the gamma-tubulin ring complex (gTuRC) which mediates microtubule nucleation. The gTuRC regulates the minus-end nucleation of alpha-beta tubulin heterodimers that grow into microtubule protafilaments, a critical step in centrosome duplication and spindle formation. Plays a role in neuronal migration. This Homo sapiens (Human) protein is Gamma-tubulin complex component 2 (TUBGCP2).